The chain runs to 282 residues: Large ribosomal subunit protein uL2 (282 aa).

Disordered stretches follow at residues 31–55 (KRLTKPVRKSGGRNAHGKVTTRHIG) and 223–282 (LAMN…NTQR). 2 stretches are compositionally biased toward basic residues: residues 34-55 (TKPVRKSGGRNAHGKVTTRHIG) and 270-282 (VTRRRPGVRNTQR).

Belongs to the universal ribosomal protein uL2 family. In terms of assembly, part of the 50S ribosomal subunit. Forms a bridge to the 30S subunit in the 70S ribosome.

In terms of biological role, one of the primary rRNA binding proteins. Required for association of the 30S and 50S subunits to form the 70S ribosome, for tRNA binding and peptide bond formation. It has been suggested to have peptidyltransferase activity; this is somewhat controversial. Makes several contacts with the 16S rRNA in the 70S ribosome. The chain is Large ribosomal subunit protein uL2 from Anaeromyxobacter dehalogenans (strain 2CP-C).